Consider the following 131-residue polypeptide: Metalloproteinase inhibitor (131 aa).

An N-terminal signal peptide occupies residues 1–29; that stretch reads MVRKRALGLAGSALTLVLGAVGFTAPAQA. 2 disulfides stabilise this stretch: Cys-33/Cys-39 and Cys-93/Cys-98.

Its function is as follows. Inhibits microbial metallo-proteinases, such as thermolysin, but not serine, thiol, or carboxyl proteinases. The sequence is that of Metalloproteinase inhibitor (smpI) from Streptomyces nigrescens.